A 135-amino-acid chain; its full sequence is Small ribosomal subunit protein uS11 (135 aa).

The tract at residues 1–26 (MPPKSRTAGGARKTRRKEKKNVSHGH) is disordered. Over residues 12-23 (RKTRRKEKKNVS) the composition is skewed to basic residues.

This sequence belongs to the universal ribosomal protein uS11 family. As to quaternary structure, part of the 30S ribosomal subunit. Interacts with proteins S7 and S18. Binds to IF-3.

In terms of biological role, located on the platform of the 30S subunit, it bridges several disparate RNA helices of the 16S rRNA. Forms part of the Shine-Dalgarno cleft in the 70S ribosome. The polypeptide is Small ribosomal subunit protein uS11 (Beutenbergia cavernae (strain ATCC BAA-8 / DSM 12333 / CCUG 43141 / JCM 11478 / NBRC 16432 / NCIMB 13614 / HKI 0122)).